The sequence spans 203 residues: MNRSRRLALLCLGVPLLLQACASVAPSRSFDVDQDAASRQYTGRFSANYVRYGRDEGVQGSFRWEEQGRNVRLDLVSPLGQTLAVVTATPSGATLDLPNQPPRNAPEVDTLMEEALGFALPVAGMRDWLHGRATQGSPARATRDEQGRLATLAQNGWTVRYVAWQDTPAPGAAATQVPRRIDLARDAGSNPLSVRLVIDPQTP.

Positions 1–20 (MNRSRRLALLCLGVPLLLQA) are cleaved as a signal peptide. The N-palmitoyl cysteine moiety is linked to residue Cys21. Residue Cys21 is the site of S-diacylglycerol cysteine attachment.

The protein belongs to the LolB family. As to quaternary structure, monomer.

The protein localises to the cell outer membrane. Its function is as follows. Plays a critical role in the incorporation of lipoproteins in the outer membrane after they are released by the LolA protein. The protein is Outer-membrane lipoprotein LolB of Cupriavidus taiwanensis (strain DSM 17343 / BCRC 17206 / CCUG 44338 / CIP 107171 / LMG 19424 / R1) (Ralstonia taiwanensis (strain LMG 19424)).